Here is a 1408-residue protein sequence, read N- to C-terminus: DNA-directed RNA polymerase subunit beta' (1408 aa).

Zn(2+) contacts are provided by C70, C72, C85, and C88. Mg(2+) is bound by residues D460, D462, and D464. Zn(2+) contacts are provided by C814, C888, C895, and C898.

It belongs to the RNA polymerase beta' chain family. In terms of assembly, the RNAP catalytic core consists of 2 alpha, 1 beta, 1 beta' and 1 omega subunit. When a sigma factor is associated with the core the holoenzyme is formed, which can initiate transcription. The cofactor is Mg(2+). It depends on Zn(2+) as a cofactor.

It catalyses the reaction RNA(n) + a ribonucleoside 5'-triphosphate = RNA(n+1) + diphosphate. DNA-dependent RNA polymerase catalyzes the transcription of DNA into RNA using the four ribonucleoside triphosphates as substrates. This is DNA-directed RNA polymerase subunit beta' from Shewanella frigidimarina (strain NCIMB 400).